A 1405-amino-acid chain; its full sequence is DNA-directed RNA polymerase subunit beta' (1405 aa).

Residues cysteine 70, cysteine 72, cysteine 85, and cysteine 88 each coordinate Zn(2+). The Mg(2+) site is built by aspartate 460, aspartate 462, and aspartate 464. Residues cysteine 815, cysteine 890, cysteine 897, and cysteine 900 each contribute to the Zn(2+) site.

The protein belongs to the RNA polymerase beta' chain family. As to quaternary structure, the RNAP catalytic core consists of 2 alpha, 1 beta, 1 beta' and 1 omega subunit. When a sigma factor is associated with the core the holoenzyme is formed, which can initiate transcription. Mg(2+) serves as cofactor. The cofactor is Zn(2+).

The catalysed reaction is RNA(n) + a ribonucleoside 5'-triphosphate = RNA(n+1) + diphosphate. Its function is as follows. DNA-dependent RNA polymerase catalyzes the transcription of DNA into RNA using the four ribonucleoside triphosphates as substrates. The protein is DNA-directed RNA polymerase subunit beta' of Xanthomonas campestris pv. campestris (strain B100).